Consider the following 132-residue polypeptide: MVMTDPIADMLTRIRNANMVRHEKLEVPASKIKREIAEILKREGFIRDVEYIEDNKQGILRIFLKYGPNNERVITGLKRISKPGLRVYAKADEVPRVLNGLGIAILSTSQGILTDKEARQKRTGGEVLAYIW.

It belongs to the universal ribosomal protein uS8 family. As to quaternary structure, part of the 30S ribosomal subunit. Contacts proteins S5 and S12.

One of the primary rRNA binding proteins, it binds directly to 16S rRNA central domain where it helps coordinate assembly of the platform of the 30S subunit. This Anoxybacillus flavithermus (strain DSM 21510 / WK1) protein is Small ribosomal subunit protein uS8.